The chain runs to 135 residues: Interleukin-4 (135 aa).

Positions 1 to 24 (MGLTSQLIPVLVCLLACTSHFVHG) are cleaved as a signal peptide. Disulfide bonds link cysteine 27–cysteine 135, cysteine 48–cysteine 85, and cysteine 70–cysteine 105. 2 N-linked (GlcNAc...) asparagine glycosylation sites follow: asparagine 62 and asparagine 96.

The protein belongs to the IL-4/IL-13 family.

The protein localises to the secreted. Participates in at least several B-cell activation processes as well as of other cell types. It is a costimulator of DNA-synthesis. It induces the expression of class II MHC molecules on resting B-cells. It enhances both secretion and cell surface expression of IgE and IgG1. It also regulates the expression of the low affinity Fc receptor for IgE (CD23) on both lymphocytes and monocytes. Positively regulates IL31RA expression in macrophages. Stimulates autophagy in dendritic cells by interfering with mTORC1 signaling and through the induction of RUFY4. In Cervus elaphus (Red deer), this protein is Interleukin-4 (IL4).